A 461-amino-acid polypeptide reads, in one-letter code: L-cystine uptake protein TcyP (461 aa).

10 helical membrane passes run 1–21, 33–53, 72–92, 104–124, 183–203, 224–244, 262–282, 337–357, 369–389, and 393–413; these read MTLF…LLYM, VFTA…IYGS, YVKL…LGAF, ISGL…AVGI, PTST…YLGV, IIMR…LAIM, FVIA…LLIT, LSIG…IMIA, FLFT…GVGG, and FAAL…GLLI.

It belongs to the dicarboxylate/amino acid:cation symporter (DAACS) (TC 2.A.23) family.

It localises to the membrane. Its function is as follows. Mediates uptake of L-cystine, the oxidized form of L-cysteine. In Bacillus licheniformis (strain ATCC 14580 / DSM 13 / JCM 2505 / CCUG 7422 / NBRC 12200 / NCIMB 9375 / NCTC 10341 / NRRL NRS-1264 / Gibson 46), this protein is L-cystine uptake protein TcyP (tcyP).